A 110-amino-acid chain; its full sequence is Phosphoribosyl-ATP pyrophosphatase (110 aa).

It belongs to the PRA-PH family.

It localises to the cytoplasm. The enzyme catalyses 1-(5-phospho-beta-D-ribosyl)-ATP + H2O = 1-(5-phospho-beta-D-ribosyl)-5'-AMP + diphosphate + H(+). It participates in amino-acid biosynthesis; L-histidine biosynthesis; L-histidine from 5-phospho-alpha-D-ribose 1-diphosphate: step 2/9. This is Phosphoribosyl-ATP pyrophosphatase from Clostridium novyi (strain NT).